A 311-amino-acid chain; its full sequence is Aspartate carbamoyltransferase catalytic subunit (311 aa).

Carbamoyl phosphate is bound by residues arginine 55 and threonine 56. L-aspartate is bound at residue lysine 85. Residues arginine 106, histidine 135, and glutamine 138 each coordinate carbamoyl phosphate. 2 residues coordinate L-aspartate: arginine 168 and arginine 230. The carbamoyl phosphate site is built by leucine 268 and proline 269.

Belongs to the aspartate/ornithine carbamoyltransferase superfamily. ATCase family. As to quaternary structure, heterododecamer (2C3:3R2) of six catalytic PyrB chains organized as two trimers (C3), and six regulatory PyrI chains organized as three dimers (R2).

It catalyses the reaction carbamoyl phosphate + L-aspartate = N-carbamoyl-L-aspartate + phosphate + H(+). Its pathway is pyrimidine metabolism; UMP biosynthesis via de novo pathway; (S)-dihydroorotate from bicarbonate: step 2/3. Catalyzes the condensation of carbamoyl phosphate and aspartate to form carbamoyl aspartate and inorganic phosphate, the committed step in the de novo pyrimidine nucleotide biosynthesis pathway. This Buchnera aphidicola subsp. Schizaphis graminum (strain Sg) protein is Aspartate carbamoyltransferase catalytic subunit.